Reading from the N-terminus, the 338-residue chain is Replication factor C small subunit (338 aa).

53-60 (GPPGVGKT) is an ATP binding site.

This sequence belongs to the activator 1 small subunits family. RfcS subfamily. Heteromultimer composed of small subunits (RfcS) and large subunits (RfcL).

Functionally, part of the RFC clamp loader complex which loads the PCNA sliding clamp onto DNA. The sequence is that of Replication factor C small subunit from Methanosarcina acetivorans (strain ATCC 35395 / DSM 2834 / JCM 12185 / C2A).